Here is a 185-residue protein sequence, read N- to C-terminus: Ribosome-recycling factor (185 aa).

Belongs to the RRF family.

The protein localises to the cytoplasm. Its function is as follows. Responsible for the release of ribosomes from messenger RNA at the termination of protein biosynthesis. May increase the efficiency of translation by recycling ribosomes from one round of translation to another. The polypeptide is Ribosome-recycling factor (Helicobacter pylori (strain Shi470)).